We begin with the raw amino-acid sequence, 336 residues long: F-box protein At5g50450 (336 aa).

An F-box domain is found at 19–70 (NNHFEDLHDDLIISILRKLATSASSPSDFLTVLSTCKRLNRLGLHPLVLSKA). Zn(2+)-binding residues include His263, Cys266, Cys279, Cys282, Cys288, Cys292, His301, and Cys305. Residues 263 to 305 (HGGCGRPETRAHEFRRCSVCGKVNYCSRGCQALDWRAKHKVEC) form an MYND-type; atypical zinc finger.

The chain is F-box protein At5g50450 from Arabidopsis thaliana (Mouse-ear cress).